A 201-amino-acid polypeptide reads, in one-letter code: Large ribosomal subunit protein uL4 (201 aa).

The disordered stretch occupies residues 43 to 71 (TRAQKTRSEVSGGGKKPWAQKGTGRARAG).

This sequence belongs to the universal ribosomal protein uL4 family. As to quaternary structure, part of the 50S ribosomal subunit.

Its function is as follows. One of the primary rRNA binding proteins, this protein initially binds near the 5'-end of the 23S rRNA. It is important during the early stages of 50S assembly. It makes multiple contacts with different domains of the 23S rRNA in the assembled 50S subunit and ribosome. In terms of biological role, forms part of the polypeptide exit tunnel. This Pseudoalteromonas translucida (strain TAC 125) protein is Large ribosomal subunit protein uL4.